The primary structure comprises 122 residues: Large ribosomal subunit protein bL12 (122 aa).

The protein belongs to the bacterial ribosomal protein bL12 family. In terms of assembly, homodimer. Part of the ribosomal stalk of the 50S ribosomal subunit. Forms a multimeric L10(L12)X complex, where L10 forms an elongated spine to which 2 to 4 L12 dimers bind in a sequential fashion. Binds GTP-bound translation factors.

Forms part of the ribosomal stalk which helps the ribosome interact with GTP-bound translation factors. Is thus essential for accurate translation. This chain is Large ribosomal subunit protein bL12, found in Streptococcus mutans serotype c (strain ATCC 700610 / UA159).